We begin with the raw amino-acid sequence, 251 residues long: Small ribosomal subunit protein uS2 (251 aa).

It belongs to the universal ribosomal protein uS2 family.

This is Small ribosomal subunit protein uS2 from Synechococcus elongatus (strain ATCC 33912 / PCC 7942 / FACHB-805) (Anacystis nidulans R2).